Consider the following 406-residue polypeptide: Tyrosine--tRNA ligase (406 aa).

Tyr-35 provides a ligand contact to L-tyrosine. The short motif at 40-49 is the 'HIGH' region element; it reads PTADSLHVGH. L-tyrosine-binding residues include Tyr-168 and Gln-172. Positions 228-232 match the 'KMSKS' region motif; the sequence is KMGKT. An ATP-binding site is contributed by Lys-231. Positions 340 to 404 constitute an S4 RNA-binding domain; sequence SELLDILVEA…RGKKNYNKIV (65 aa).

Belongs to the class-I aminoacyl-tRNA synthetase family. TyrS type 1 subfamily. Homodimer.

It localises to the cytoplasm. The enzyme catalyses tRNA(Tyr) + L-tyrosine + ATP = L-tyrosyl-tRNA(Tyr) + AMP + diphosphate + H(+). Functionally, catalyzes the attachment of tyrosine to tRNA(Tyr) in a two-step reaction: tyrosine is first activated by ATP to form Tyr-AMP and then transferred to the acceptor end of tRNA(Tyr). The polypeptide is Tyrosine--tRNA ligase (Clostridium perfringens (strain ATCC 13124 / DSM 756 / JCM 1290 / NCIMB 6125 / NCTC 8237 / Type A)).